The following is a 564-amino-acid chain: Proline--tRNA ligase (564 aa).

The protein belongs to the class-II aminoacyl-tRNA synthetase family. ProS type 1 subfamily. Homodimer.

It localises to the cytoplasm. The catalysed reaction is tRNA(Pro) + L-proline + ATP = L-prolyl-tRNA(Pro) + AMP + diphosphate. Catalyzes the attachment of proline to tRNA(Pro) in a two-step reaction: proline is first activated by ATP to form Pro-AMP and then transferred to the acceptor end of tRNA(Pro). As ProRS can inadvertently accommodate and process non-cognate amino acids such as alanine and cysteine, to avoid such errors it has two additional distinct editing activities against alanine. One activity is designated as 'pretransfer' editing and involves the tRNA(Pro)-independent hydrolysis of activated Ala-AMP. The other activity is designated 'posttransfer' editing and involves deacylation of mischarged Ala-tRNA(Pro). The misacylated Cys-tRNA(Pro) is not edited by ProRS. The polypeptide is Proline--tRNA ligase (Sulfurihydrogenibium sp. (strain YO3AOP1)).